The sequence spans 63 residues: uncharacterized protein (63 aa).

This is an uncharacterized protein from Acidianus bottle-shaped virus (isolate Italy/Pozzuoli) (ABV).